Reading from the N-terminus, the 383-residue chain is Acetylornithine deacetylase (383 aa).

Residue H80 coordinates Zn(2+). D82 is an active-site residue. D112 contacts Zn(2+). E144 is an active-site residue. Zn(2+) is bound by residues E145, E169, and H355.

The protein belongs to the peptidase M20A family. ArgE subfamily. Homodimer. Zn(2+) serves as cofactor. The cofactor is Co(2+). Requires glutathione as cofactor.

It is found in the cytoplasm. It carries out the reaction N(2)-acetyl-L-ornithine + H2O = L-ornithine + acetate. It participates in amino-acid biosynthesis; L-arginine biosynthesis; L-ornithine from N(2)-acetyl-L-ornithine (linear): step 1/1. Functionally, catalyzes the hydrolysis of the amide bond of N(2)-acetylated L-amino acids. Cleaves the acetyl group from N-acetyl-L-ornithine to form L-ornithine, an intermediate in L-arginine biosynthesis pathway, and a branchpoint in the synthesis of polyamines. The polypeptide is Acetylornithine deacetylase (Edwardsiella ictaluri (strain 93-146)).